A 97-amino-acid chain; its full sequence is YcgL domain-containing protein PST_1364 (97 aa).

The region spanning 3–87 (LICSIYKSPR…AEDEYIEHLP (85 aa)) is the YcgL domain.

The sequence is that of YcgL domain-containing protein PST_1364 from Stutzerimonas stutzeri (strain A1501) (Pseudomonas stutzeri).